The following is a 64-amino-acid chain: NSGNPCCDPVTCKPRRGWHCVSNPCCDNCKFMRAGTICNRARGDDMNDYCTGISSDCPRNPYKD.

Positions 1–64 (NSGNPCCDPV…SDCPRNPYKD (64 aa)) constitute a Disintegrin domain. Disulfide bonds link Cys6/Cys29, Cys20/Cys26, Cys25/Cys50, and Cys38/Cys57. The Cell attachment site motif lies at 42-44 (RGD).

The protein belongs to the disintegrin family. Dimeric disintegrin subfamily. Heterodimer with subunit alpha; disulfide-linked. Expressed by the venom gland.

The protein resides in the secreted. Functionally, strongly inhibits ADP-induced platelet aggregation on human platelet-rich plasma. Also avidly binds to the laminin-binding beta-1 integrins (alpha-3/beta-1, alpha-6/beta-1, and alpha-7/beta-1) in an RGD-independent manner. The chain is Disintegrin lebein-1-beta from Macrovipera lebetinus (Levantine viper).